The sequence spans 106 residues: COX assembly mitochondrial protein homolog (106 aa).

A2 carries the post-translational modification N-acetylalanine. Residues 28–71 (RERCSEQVEDFTRCCKDSGILMVLKCRKENSALKDCLTAYYNDP) enclose the CHCH domain. 2 consecutive short sequence motifs (cx9C motif) follow at residues 31–41 (CSEQVEDFTRC) and 53–63 (CRKENSALKDC). Cystine bridges form between C31–C63 and C41–C53.

It belongs to the CMC family. In terms of assembly, component of the MITRAC (mitochondrial translation regulation assembly intermediate of cytochrome c oxidase complex) complex, the core components of this complex being COA3/MITRAC12 and COX14.

The protein localises to the mitochondrion. In terms of biological role, component of the MITRAC (mitochondrial translation regulation assembly intermediate of cytochrome c oxidase complex) complex, that regulates cytochrome c oxidase assembly. The polypeptide is COX assembly mitochondrial protein homolog (Cmc1) (Mus musculus (Mouse)).